Consider the following 285-residue polypeptide: GTP-binding protein 8 (285 aa).

An EngB-type G domain is found at 110 to 283 (QQPEVCFIGR…KCFIADITGS (174 aa)). GTP is bound by residues 118–125 (GRSNVGKS), 147–151 (GHTKK), 165–168 (DMPG), 227–230 (TKID), and 262–264 (ISA). Residues Ser-125 and Thr-149 each contribute to the Mg(2+) site.

This sequence belongs to the TRAFAC class TrmE-Era-EngA-EngB-Septin-like GTPase superfamily. EngB GTPase family. Requires Mg(2+) as cofactor.

The protein is GTP-binding protein 8 (Gtpbp8) of Mus musculus (Mouse).